The primary structure comprises 435 residues: Serine carboxypeptidase-like 14 (435 aa).

Residues 1-23 (MGSWIPKLLLLQLVLLLTKHADS) form the signal peptide. 3 cysteine pairs are disulfide-bonded: Cys-82–Cys-325, Cys-246–Cys-260, and Cys-284–Cys-291. Asn-103 is a glycosylation site (N-linked (GlcNAc...) asparagine). Ser-178 is an active-site residue. An N-linked (GlcNAc...) asparagine glycan is attached at Asn-344. The active site involves Asp-360. N-linked (GlcNAc...) asparagine glycosylation is present at Asn-376. His-413 is an active-site residue.

It belongs to the peptidase S10 family. In terms of tissue distribution, expressed in senescent leaves.

Its subcellular location is the secreted. In terms of biological role, probable carboxypeptidase. This chain is Serine carboxypeptidase-like 14 (SCPL14), found in Arabidopsis thaliana (Mouse-ear cress).